The chain runs to 368 residues: Spermidine/putrescine import ATP-binding protein PotA (368 aa).

The ABC transporter domain maps to 6 to 236 (VSIKNVSKFF…PVNVFAATFI (231 aa)). 38 to 45 (GPSGCGKT) lines the ATP pocket.

The protein belongs to the ABC transporter superfamily. Spermidine/putrescine importer (TC 3.A.1.11.1) family. As to quaternary structure, the complex is composed of two ATP-binding proteins (PotA), two transmembrane proteins (PotB and PotC) and a solute-binding protein (PotD).

It is found in the cell inner membrane. It catalyses the reaction ATP + H2O + polyamine-[polyamine-binding protein]Side 1 = ADP + phosphate + polyamineSide 2 + [polyamine-binding protein]Side 1.. Its function is as follows. Part of the ABC transporter complex PotABCD involved in spermidine/putrescine import. Responsible for energy coupling to the transport system. This chain is Spermidine/putrescine import ATP-binding protein PotA, found in Thermotoga maritima (strain ATCC 43589 / DSM 3109 / JCM 10099 / NBRC 100826 / MSB8).